We begin with the raw amino-acid sequence, 333 residues long: Fructose-1,6-bisphosphatase class 1 (333 aa).

Residues E92, D113, L115, and D116 each contribute to the Mg(2+) site. Substrate contacts are provided by residues D116–S119, N209, Y242, and K272. A Mg(2+)-binding site is contributed by E278.

The protein belongs to the FBPase class 1 family. As to quaternary structure, homotetramer. Mg(2+) is required as a cofactor.

Its subcellular location is the cytoplasm. The catalysed reaction is beta-D-fructose 1,6-bisphosphate + H2O = beta-D-fructose 6-phosphate + phosphate. The protein operates within carbohydrate biosynthesis; Calvin cycle. The sequence is that of Fructose-1,6-bisphosphatase class 1 from Chlorobium phaeobacteroides (strain BS1).